We begin with the raw amino-acid sequence, 459 residues long: Putrescine aminotransferase (459 aa).

Residues 150 to 151 (GT) and glutamine 274 contribute to the pyridoxal 5'-phosphate site. Lysine 300 is subject to N6-(pyridoxal phosphate)lysine. Threonine 332 lines the pyridoxal 5'-phosphate pocket.

Belongs to the class-III pyridoxal-phosphate-dependent aminotransferase family. Putrescine aminotransferase subfamily. The cofactor is pyridoxal 5'-phosphate.

It carries out the reaction an alkane-alpha,omega-diamine + 2-oxoglutarate = an omega-aminoaldehyde + L-glutamate. It catalyses the reaction putrescine + 2-oxoglutarate = 1-pyrroline + L-glutamate + H2O. The enzyme catalyses cadaverine + 2-oxoglutarate = 5-aminopentanal + L-glutamate. It functions in the pathway amine and polyamine degradation; putrescine degradation; 4-aminobutanal from putrescine (transaminase route): step 1/1. Its function is as follows. Catalyzes the aminotransferase reaction from putrescine to 2-oxoglutarate, leading to glutamate and 4-aminobutanal, which spontaneously cyclizes to form 1-pyrroline. This is the first step in one of two pathways for putrescine degradation, where putrescine is converted into 4-aminobutanoate (gamma-aminobutyrate or GABA) via 4-aminobutanal. Also functions as a cadaverine transaminase in a a L-lysine degradation pathway to succinate that proceeds via cadaverine, glutarate and L-2-hydroxyglutarate. The polypeptide is Putrescine aminotransferase (Escherichia coli (strain SMS-3-5 / SECEC)).